A 682-amino-acid polypeptide reads, in one-letter code: MDLARRGGAAGADDEGEIERHEPAPEDMESDPAAAREKELELERVQSWREQVTLRGVVAALLIGFMYSVIVMKIALTTGLVPTLNVSAALMAFLALRGWTRVLERLGVAHRPFTRQENCVIETCAVACYTIAFGGGFGSTLLGLDKKTYELAGASPANVPGSYKDPGFGWMAGFVAAISFAGLLSLIPLRKVLVIDYKLTYPSGTATAVLINGFHTKQGDKNARMQVRGFLKYFGLSFVWSFFQWFYTGGEVCGFVQFPTFGLKAWKQTFFFDFSLTYVGAGMICSHLVNISTLLGAILSWGILWPLISKQKGEWYPANIPESSMKSLYGYKAFLCIALIMGDGTYHFFKVFGVTVKSLHQRLSRKRATNRVANGGDEMAALDDLQRDEIFSDGSFPAWAAYAGYAALTVVSAVIIPHMFRQVKWYYVIVAYVLAPLLGFANSYGTGLTDINMAYNYGKIALFIFAAWAGRDNGVIAGLAGGTLVKQLVMASADLMHDFKTGHLTMTSPRSLLVAQFIGTAMGCVVAPLTFLLFYNAFDIGNPTGYWKAPYGLIYRNMAILGVEGFSVLPRHCLALSAGFFAFAFVFSVARDVLPRKYARFVPLPMAMAVPFLVGGSFAIDMCVGSLAVFVWEKVNRKEAVFMVPAVASGLICGDGIWTFPSSILALAKIKPPICMKFTPGS.

Residues 1–36 (MDLARRGGAAGADDEGEIERHEPAPEDMESDPAAAR) form a disordered region. 15 consecutive transmembrane segments (helical) span residues 56 to 76 (GVVA…KIAL), 79 to 99 (GLVP…LRGW), 124 to 144 (CAVA…LLGL), 167 to 187 (GFGW…LSLI), 236 to 256 (LSFV…CGFV), 288 to 308 (LVNI…WPLI), 334 to 354 (FLCI…VFGV), 396 to 416 (FPAW…AVII), 428 to 448 (VIVA…GTGL), 460 to 480 (IALF…AGLA), 514 to 534 (VAQF…FLLF), 549 to 569 (APYG…FSVL), 574 to 594 (LALS…RDVL), 612 to 632 (FLVG…VFVW), and 640 to 660 (AVFM…IWTF).

This sequence belongs to the YSL (TC 2.A.67.2) family. As to expression, expressed in roots of young maize seedlings. Not detected in leaves of iron-sufficient plants, but accumulates in roots and leaves of iron-deficient plants.

The protein resides in the membrane. Its function is as follows. Involved in Fe(3+) uptake. Acts as a proton-coupled symporter for phytosiderophore- and nicotianamine-chelated metals. Capable of transporting either Fe(2+)-nicotianamine or Fe(3+)-phytosiderophore. May transport iron, zinc, nickel, copper and, at a lower rate, manganese and cadmium. This is Iron-phytosiderophore transporter yellow stripe 1 (YS1) from Zea mays (Maize).